The sequence spans 400 residues: S-adenosylmethionine synthase (400 aa).

An ATP-binding site is contributed by 137–142 (GEGSGD).

Belongs to the AdoMet synthase 2 family. It depends on Mg(2+) as a cofactor.

It carries out the reaction L-methionine + ATP + H2O = S-adenosyl-L-methionine + phosphate + diphosphate. It participates in amino-acid biosynthesis; S-adenosyl-L-methionine biosynthesis; S-adenosyl-L-methionine from L-methionine: step 1/1. In terms of biological role, catalyzes the formation of S-adenosylmethionine from methionine and ATP. This chain is S-adenosylmethionine synthase, found in Haloarcula marismortui (strain ATCC 43049 / DSM 3752 / JCM 8966 / VKM B-1809) (Halobacterium marismortui).